Here is a 130-residue protein sequence, read N- to C-terminus: DNA-directed RNA polymerase subunit omega (130 aa).

The disordered stretch occupies residues 108-130; the sequence is TEEELLKGLEGLAPPEEQPEEDE.

The protein belongs to the RNA polymerase subunit omega family. As to quaternary structure, the RNAP catalytic core consists of 2 alpha, 1 beta, 1 beta' and 1 omega subunit. When a sigma factor is associated with the core the holoenzyme is formed, which can initiate transcription.

The enzyme catalyses RNA(n) + a ribonucleoside 5'-triphosphate = RNA(n+1) + diphosphate. Functionally, promotes RNA polymerase assembly. Latches the N- and C-terminal regions of the beta' subunit thereby facilitating its interaction with the beta and alpha subunits. The protein is DNA-directed RNA polymerase subunit omega of Rhodopseudomonas palustris (strain ATCC BAA-98 / CGA009).